Here is a 228-residue protein sequence, read N- to C-terminus: Uracil-DNA glycosylase (228 aa).

The active-site Proton acceptor is Asp64.

This sequence belongs to the uracil-DNA glycosylase (UDG) superfamily. UNG family. As to quaternary structure, monomer.

It is found in the cytoplasm. The catalysed reaction is Hydrolyzes single-stranded DNA or mismatched double-stranded DNA and polynucleotides, releasing free uracil.. Its function is as follows. Excises uracil residues from the DNA which can arise as a result of misincorporation of dUMP residues by DNA polymerase or due to deamination of cytosine. The chain is Uracil-DNA glycosylase from Escherichia coli O6:H1 (strain CFT073 / ATCC 700928 / UPEC).